We begin with the raw amino-acid sequence, 286 residues long: MPLVSMKEMLIDAKENGYAVGQYNINNLEFTQAILEASQEENAPVILGVSEGAARYMSGFYTIVKMVEGLMHDLNITIPVAIHLDHGSSFEKCKEAIDAGFTSVMIDASHSPFEENVATTKKVVEYAHEKGVSVEAELGTVGGQEDDVVADGIIYADPKECQELVEKTGIDALAPALGSVHGPYKGEPKLGFKEMEEIGLSTGLPLVLHGGTGIPTKDIQKAIPFGTAKINVNTENQIASAKAVRDVLNNDKEVYDPRKYLGPAREAIKETVKGKIKEFGTSNRAK.

S50 serves as a coordination point for D-glyceraldehyde 3-phosphate. D85 serves as the catalytic Proton donor. H86, D107, E137, and H181 together coordinate Zn(2+). Residue G182 coordinates dihydroxyacetone phosphate. A Zn(2+)-binding site is contributed by H209. Dihydroxyacetone phosphate contacts are provided by residues 210-212 (GGT) and 231-234 (NVNT).

The protein belongs to the class II fructose-bisphosphate aldolase family. Requires Zn(2+) as cofactor.

The catalysed reaction is beta-D-fructose 1,6-bisphosphate = D-glyceraldehyde 3-phosphate + dihydroxyacetone phosphate. Its pathway is carbohydrate degradation; glycolysis; D-glyceraldehyde 3-phosphate and glycerone phosphate from D-glucose: step 4/4. In terms of biological role, catalyzes the aldol condensation of dihydroxyacetone phosphate (DHAP or glycerone-phosphate) with glyceraldehyde 3-phosphate (G3P) to form fructose 1,6-bisphosphate (FBP) in gluconeogenesis and the reverse reaction in glycolysis. The polypeptide is Fructose-bisphosphate aldolase (fba) (Staphylococcus aureus (strain MSSA476)).